The sequence spans 282 residues: MARRVSTTRLLLLLLLVAAAAAAAAAGDQEDPRGGGDNGTARLDRRTKMFLHAARASDGGATGMEKAGLGLFDAFFASLSMILVSEIGDETFIIAALMAMRHPKSTVLSGALSALVVMTILSTGLGRIVPNLISRKHTNSAATVLYAFFGLRLLYIAWRSDSKASQKKEIEEVEEKLEAGQGKSTFRRIFSRFCTPIFLESFVLTFLAEWGDRSQIATIALATHKNAVGVAVGATLGHTICTSFAVVGGSMLASKISQGTVATIGGLLFLGFSLSSYFYPPL.

Residues 1–26 form the signal peptide; sequence MARRVSTTRLLLLLLLVAAAAAAAAA. 6 helical membrane-spanning segments follow: residues 67–87, 106–126, 138–158, 189–209, 227–247, and 259–279; these read AGLG…VSEI, TVLS…TGLG, TNSA…YIAW, IFSR…FLAE, AVGV…FAVV, and GTVA…SYFY.

Belongs to the GDT1 family.

It is found in the membrane. In Oryza sativa subsp. japonica (Rice), this protein is GDT1-like protein 4.